The primary structure comprises 348 residues: Protein RecA (348 aa).

64-71 contributes to the ATP binding site; the sequence is GPESSGKT. A disordered region spans residues 328 to 348; the sequence is DTGGAAPAQEDEAQAQEELEF. Over residues 336 to 348 the composition is skewed to acidic residues; the sequence is QEDEAQAQEELEF.

This sequence belongs to the RecA family.

The protein localises to the cytoplasm. Can catalyze the hydrolysis of ATP in the presence of single-stranded DNA, the ATP-dependent uptake of single-stranded DNA by duplex DNA, and the ATP-dependent hybridization of homologous single-stranded DNAs. It interacts with LexA causing its activation and leading to its autocatalytic cleavage. The chain is Protein RecA from Bacillus licheniformis (strain ATCC 14580 / DSM 13 / JCM 2505 / CCUG 7422 / NBRC 12200 / NCIMB 9375 / NCTC 10341 / NRRL NRS-1264 / Gibson 46).